Reading from the N-terminus, the 514-residue chain is Protein spinster homolog 3 (514 aa).

Residues 1–22 are disordered; it reads MSTECLKPQTGGPQSQSLSQGG. The span at 9 to 21 shows a compositional bias: low complexity; the sequence is QTGGPQSQSLSQG. Helical transmembrane passes span 54-74, 88-108, 116-136, 149-169, 176-196, 212-232, 264-284, 313-333, 347-367, 376-396, 415-435, and 453-473; these read VLCY…GVLL, GLLQ…FGYL, AILS…SFIS, FVGT…GDLF, CALA…YVLG, LMPC…PDVP, FVFS…LGFW, LIFG…GAEA, LICA…LILA, VFLA…ADIL, VAHV…SSVL, and SFLC…LTAL. Residues 482–514 form a disordered region; that stretch reads ARQPGKGTLDSKDIASRNTESQGLLSGTSTPTE. A compositionally biased stretch (polar residues) spans 497–514; sequence SRNTESQGLLSGTSTPTE.

Belongs to the major facilitator superfamily. Spinster (TC 2.A.1.49) family.

It localises to the membrane. Functionally, sphingolipid transporter. This Mus musculus (Mouse) protein is Protein spinster homolog 3 (Spns3).